A 127-amino-acid chain; its full sequence is MPLFGSIFSPKKTPPRKSASLSNLHSLDRSTRELELGLDYGTPTMNLAGQSLKFENGQWVADSVISGGVDRRETQRLRKRNQQLEEENNLLRLKVDILLDMLSETTAESHLKDKELDELKITNRRRK.

A disordered region spans residues 1 to 25 (MPLFGSIFSPKKTPPRKSASLSNLH). Residues serine 9 and serine 20 each carry the phosphoserine modification. Positions 60–112 (VADSVISGGVDRRETQRLRKRNQQLEEENNLLRLKVDILLDMLSETTAESHLK) are minimal region for the interaction with PKD2. Residues 68–110 (GVDRRETQRLRKRNQQLEEENNLLRLKVDILLDMLSETTAESH) adopt a coiled-coil conformation. The interval 77 to 98 (LRKRNQQLEEENNLLRLKVDIL) is leucine-zipper; mediates homodimerization.

This sequence belongs to the chibby family. As to quaternary structure, homodimer. Homodimerization is essential for nuclear localization and interaction with KPNA4 but is dispensable for interaction with CTNNB1. Interacts with polycystin-2/PKD2 and GM130. Interacts with the C-terminal region of CTNNB1. Interacts (C-terminus) with TCIM (C-terminus), TCIM competes with CTNNB1 for the interaction with CBY1. Interacts with FAM92A; this interaction facilitates targeting of FAM92A to cilium basal body. Interacts with CIBAR2. Interacts with KPNA4.

It localises to the nucleus speckle. Its subcellular location is the cytoplasm. The protein localises to the cytoskeleton. It is found in the cilium basal body. The protein resides in the microtubule organizing center. It localises to the centrosome. Its subcellular location is the centriole. The protein localises to the golgi apparatus. It is found in the trans-Golgi network. The protein resides in the cell projection. It localises to the cilium. Its subcellular location is the flagellum. The protein localises to the nucleus. In terms of biological role, inhibits the Wnt/Wingless pathway by binding to CTNNB1/beta-catenin and inhibiting beta-catenin-mediated transcriptional activation through competition with TCF/LEF transcription factors. Has also been shown to play a role in regulating the intracellular trafficking of polycystin-2/PKD2 and possibly of other intracellular proteins. Promotes adipocyte and cardiomyocyte differentiation. This is Protein chibby homolog 1 (Cby1) from Rattus norvegicus (Rat).